Consider the following 475-residue polypeptide: Glutamyl-tRNA(Gln) amidotransferase subunit A (475 aa).

Active-site charge relay system residues include Lys-69 and Ser-144. The active-site Acyl-ester intermediate is the Ser-168.

This sequence belongs to the amidase family. GatA subfamily. Heterotrimer of A, B and C subunits.

It catalyses the reaction L-glutamyl-tRNA(Gln) + L-glutamine + ATP + H2O = L-glutaminyl-tRNA(Gln) + L-glutamate + ADP + phosphate + H(+). Allows the formation of correctly charged Gln-tRNA(Gln) through the transamidation of misacylated Glu-tRNA(Gln) in organisms which lack glutaminyl-tRNA synthetase. The reaction takes place in the presence of glutamine and ATP through an activated gamma-phospho-Glu-tRNA(Gln). The chain is Glutamyl-tRNA(Gln) amidotransferase subunit A from Methanosarcina barkeri (strain Fusaro / DSM 804).